The sequence spans 319 residues: Acetyl-coenzyme A carboxylase carboxyl transferase subunit alpha (319 aa).

Positions 39-296 constitute a CoA carboxyltransferase C-terminal domain; the sequence is EINRLRSKSI…KTQLLLDLTE (258 aa).

It belongs to the AccA family. Acetyl-CoA carboxylase is a heterohexamer composed of biotin carboxyl carrier protein (AccB), biotin carboxylase (AccC) and two subunits each of ACCase subunit alpha (AccA) and ACCase subunit beta (AccD).

The protein resides in the cytoplasm. The catalysed reaction is N(6)-carboxybiotinyl-L-lysyl-[protein] + acetyl-CoA = N(6)-biotinyl-L-lysyl-[protein] + malonyl-CoA. It participates in lipid metabolism; malonyl-CoA biosynthesis; malonyl-CoA from acetyl-CoA: step 1/1. In terms of biological role, component of the acetyl coenzyme A carboxylase (ACC) complex. First, biotin carboxylase catalyzes the carboxylation of biotin on its carrier protein (BCCP) and then the CO(2) group is transferred by the carboxyltransferase to acetyl-CoA to form malonyl-CoA. This chain is Acetyl-coenzyme A carboxylase carboxyl transferase subunit alpha, found in Blochmanniella pennsylvanica (strain BPEN).